A 1227-amino-acid polypeptide reads, in one-letter code: Methionine synthase (1227 aa).

The Hcy-binding domain maps to 2 to 325; sequence SSKVEQLRAQ…EHIAAMSRAV (324 aa). Residues Cys247, Cys310, and Cys311 each contribute to the Zn(2+) site. Residues 356-617 enclose the Pterin-binding domain; that stretch reads FVNVGERTNV…LPAELRDAVE (262 aa). In terms of domain architecture, B12-binding N-terminal spans 650 to 744; sequence QQAEWRSWDV…FIEASKEKGS (95 aa). Methylcob(III)alamin-binding positions include Glu694, 756-760, His759, Ser804, Thr808, and Ala860; that span reads GDVHD. Residues 746–881 enclose the B12-binding domain; the sequence is NGKMVIATVK…SDTQRDDFVA (136 aa). The AdoMet activation domain maps to 897–1227; it reads KKPRTPPVTL…LAPNLGYDAD (331 aa). S-adenosyl-L-methionine is bound by residues Asp946, Arg1134, and 1189 to 1190; that span reads YF.

This sequence belongs to the vitamin-B12 dependent methionine synthase family. Methylcob(III)alamin is required as a cofactor. The cofactor is Zn(2+).

It catalyses the reaction (6S)-5-methyl-5,6,7,8-tetrahydrofolate + L-homocysteine = (6S)-5,6,7,8-tetrahydrofolate + L-methionine. It functions in the pathway amino-acid biosynthesis; L-methionine biosynthesis via de novo pathway; L-methionine from L-homocysteine (MetH route): step 1/1. Functionally, catalyzes the transfer of a methyl group from methyl-cobalamin to homocysteine, yielding enzyme-bound cob(I)alamin and methionine. Subsequently, remethylates the cofactor using methyltetrahydrofolate. This is Methionine synthase (metH) from Salmonella typhimurium (strain LT2 / SGSC1412 / ATCC 700720).